The following is a 268-amino-acid chain: Glucosamine-6-phosphate deaminase (268 aa).

Residue Asp-72 is the Proton acceptor; for enolization step of the active site. Residue Asp-141 is the For ring-opening step of the active site. His-143 (proton acceptor; for ring-opening step) is an active-site residue. Catalysis depends on Glu-148, which acts as the For ring-opening step.

It belongs to the glucosamine/galactosamine-6-phosphate isomerase family. NagB subfamily. Homohexamer.

The catalysed reaction is alpha-D-glucosamine 6-phosphate + H2O = beta-D-fructose 6-phosphate + NH4(+). Its pathway is amino-sugar metabolism; N-acetylneuraminate degradation; D-fructose 6-phosphate from N-acetylneuraminate: step 5/5. Allosterically activated by N-acetylglucosamine 6-phosphate (GlcNAc6P). In terms of biological role, catalyzes the reversible isomerization-deamination of glucosamine 6-phosphate (GlcN6P) to form fructose 6-phosphate (Fru6P) and ammonium ion. This Proteus mirabilis (strain HI4320) protein is Glucosamine-6-phosphate deaminase.